The chain runs to 350 residues: Cell division protein ZipA (350 aa).

Over 1–6 the chain is Periplasmic; that stretch reads MEDLQL. The helical transmembrane segment at 7-27 threads the bilayer; the sequence is VLFVLGAIAIVAVLVHGFWSI. Residues 28–350 are Cytoplasmic-facing; the sequence is RKQQPRTIKE…QYLARIRANA (323 aa). Disordered regions lie at residues 36 to 55, 65 to 136, and 187 to 213; these read KEQP…AEGF, VRKL…PSAR, and RVPA…EEPL. Basic and acidic residues-rich tracts occupy residues 65–109 and 116–131; these read VRKL…ESRA and AAHE…HEEP.

Belongs to the ZipA family. As to quaternary structure, interacts with FtsZ via their C-terminal domains.

It is found in the cell inner membrane. In terms of biological role, essential cell division protein that stabilizes the FtsZ protofilaments by cross-linking them and that serves as a cytoplasmic membrane anchor for the Z ring. Also required for the recruitment to the septal ring of downstream cell division proteins. In Shewanella amazonensis (strain ATCC BAA-1098 / SB2B), this protein is Cell division protein ZipA.